Here is a 162-residue protein sequence, read N- to C-terminus: Transcription antitermination protein RfaH (162 aa).

It belongs to the RfaH family. In terms of assembly, interacts with both the nontemplate DNA and the RNA polymerase (RNAP).

In terms of biological role, enhances distal genes transcription elongation in a specialized subset of operons that encode extracytoplasmic components. RfaH is recruited into a multi-component RNA polymerase complex by the ops element, which is a short conserved DNA sequence located downstream of the main promoter of these operons. Once bound, RfaH suppresses pausing and inhibits Rho-dependent and intrinsic termination at a subset of sites. Termination signals are bypassed, which allows complete synthesis of long RNA chains. Also negatively controls expression and surface presentation of AG43 and possibly another AG43-independent factor that mediates cell-cell interactions and biofilm formation,. In Escherichia coli O6:K15:H31 (strain 536 / UPEC), this protein is Transcription antitermination protein RfaH.